The chain runs to 473 residues: Serine palmitoyltransferase 1 (473 aa).

Positions 1–66 are interaction with SPTLC2; sequence MATATEQWVL…KEELIEEWQP (66 aa). Residues 16–36 form a helical membrane-spanning segment; the sequence is ALYEAPAYHLILEGILILWII. Residue Tyr164 is modified to Phosphotyrosine; by ABL.

It belongs to the class-II pyridoxal-phosphate-dependent aminotransferase family. In terms of assembly, component of the serine palmitoyltransferase (SPT) complex, which is also composed of SPTLC2 or SPTLC3 and SPTSSA or SPTSSB. The heterodimer with SPTLC2 or SPTLC3 forms the catalytic core of the enzyme, while SPTSSA or SPTSSB subunits determine substrate specificity. SPT also interacts with ORMDL proteins, especially ORMDL3, which negatively regulate SPT activity in the presence of ceramides. Forms dimers of heterodimers with SPTLC2. Interacts with RTN4. Requires pyridoxal 5'-phosphate as cofactor. Phosphorylation at Tyr-164 inhibits activity and promotes cell survival.

It localises to the endoplasmic reticulum membrane. The catalysed reaction is L-serine + hexadecanoyl-CoA + H(+) = 3-oxosphinganine + CO2 + CoA. It catalyses the reaction octadecanoyl-CoA + L-serine + H(+) = 3-oxoeicosasphinganine + CO2 + CoA. It carries out the reaction tetradecanoyl-CoA + L-serine + H(+) = 3-oxohexadecasphinganine + CO2 + CoA. The enzyme catalyses dodecanoyl-CoA + L-serine + H(+) = 3-oxotetradecasphinganine + CO2 + CoA. The protein operates within lipid metabolism; sphingolipid metabolism. SPT complex catalytic activity is negatively regulated by ORMDL proteins, including ORMDL3, in the presence of ceramides. This mechanism allows to maintain ceramide levels at sufficient concentrations for the production of complex sphingolipids, but which prevents the accumulation of ceramides to levels that trigger apoptosis. In terms of biological role, component of the serine palmitoyltransferase multisubunit enzyme (SPT) that catalyzes the initial and rate-limiting step in sphingolipid biosynthesis by condensing L-serine and activated acyl-CoA (most commonly palmitoyl-CoA) to form long-chain bases. The SPT complex is also composed of SPTLC2 or SPTLC3 and SPTSSA or SPTSSB. Within this complex, the heterodimer with SPTLC2 or SPTLC3 forms the catalytic core. The composition of the serine palmitoyltransferase (SPT) complex determines the substrate preference. The SPTLC1-SPTLC2-SPTSSA complex shows a strong preference for C16-CoA substrate, while the SPTLC1-SPTLC3-SPTSSA isozyme uses both C14-CoA and C16-CoA as substrates, with a slight preference for C14-CoA. The SPTLC1-SPTLC2-SPTSSB complex shows a strong preference for C18-CoA substrate, while the SPTLC1-SPTLC3-SPTSSB isozyme displays an ability to use a broader range of acyl-CoAs, without apparent preference. Required for adipocyte cell viability and metabolic homeostasis. The protein is Serine palmitoyltransferase 1 (SPTLC1) of Pongo abelii (Sumatran orangutan).